Consider the following 228-residue polypeptide: MERVKMINVQPMLEAAEFLERRERECEHGYASSFPSMPSPRLQHSKPPRRLSRAQKHSSGSSNTSTANRSTHNELEKNRRAHLRLCLERLKVLIPLGPDCTRHTTLGLLNKAKAHIKKLEEAERKSQHQLENLEREQRFLKRRLEQLQGPQEMERIRMDSIGSTISSDRSDSEREEIEVDVESTEFSHGEVDNISTTSISDIDDHSSLQSIGSDEGYSSASVKLSFTS.

Disordered stretches follow at residues 29–76 (GYAS…NELE) and 162–228 (GSTI…SFTS). Residues 43 to 56 (QHSKPPRRLSRAQK) are compositionally biased toward basic residues. Residues 57–70 (HSSGSSNTSTANRS) show a composition bias toward polar residues. One can recognise a bHLH domain in the interval 67–119 (ANRSTHNELEKNRRAHLRLCLERLKVLIPLGPDCTRHTTLGLLNKAKAHIKKL). The segment covering 173–183 (EREEIEVDVES) has biased composition (acidic residues). Polar residues predominate over residues 216-228 (GYSSASVKLSFTS).

As to quaternary structure, efficient DNA binding requires dimerization with another bHLH protein. Binds DNA as a heterodimer with MAX. Interacts with SMC3. Interacts with RNF17.

The protein resides in the nucleus. Functionally, transcriptional repressor. MXI1 binds with MAX to form a sequence-specific DNA-binding protein complex which recognizes the core sequence 5'-CAC[GA]TG-3'. MXI1 thus antagonizes MYC transcriptional activity by competing for MAX. This chain is Max-interacting protein 1 (Mxi1), found in Rattus norvegicus (Rat).